The following is a 492-amino-acid chain: Trk system potassium uptake protein TrkI (492 aa).

The next 10 membrane-spanning stretches (helical) occupy residues 20 to 40 (VLAV…LVLI), 47 to 67 (ALAF…SWIV), 81 to 101 (FVLT…PLVL), 143 to 163 (IMQW…LPFL), 196 to 216 (IYCG…MSPL), 246 to 266 (QLLW…VLYI), 282 to 302 (VQGL…WRVS), 334 to 354 (AWGA…GCSG), 403 to 423 (VVAF…GLSL), and 465 to 485 (WLLC…LVLL).

It belongs to the TrkH potassium transport family.

Its subcellular location is the cell inner membrane. In terms of biological role, medium-affinity potassium transport system. Probably interacts with Trk system potassium uptake protein TrkA. Main K(+) transporter in osmotically adapted cells. In Halomonas elongata (strain ATCC 33173 / DSM 2581 / NBRC 15536 / NCIMB 2198 / 1H9), this protein is Trk system potassium uptake protein TrkI (trkI).